We begin with the raw amino-acid sequence, 185 residues long: Ribosome-recycling factor (185 aa).

This sequence belongs to the RRF family.

The protein resides in the cytoplasm. In terms of biological role, responsible for the release of ribosomes from messenger RNA at the termination of protein biosynthesis. May increase the efficiency of translation by recycling ribosomes from one round of translation to another. This Streptococcus pneumoniae serotype 19F (strain G54) protein is Ribosome-recycling factor.